We begin with the raw amino-acid sequence, 681 residues long: DNA-directed RNA polymerase subunit beta' (681 aa).

Positions 69, 71, 87, and 90 each coordinate Zn(2+). Mg(2+)-binding residues include Asp-490, Asp-492, and Asp-494.

The protein belongs to the RNA polymerase beta' chain family. RpoC1 subfamily. In terms of assembly, in plastids the minimal PEP RNA polymerase catalytic core is composed of four subunits: alpha, beta, beta', and beta''. When a (nuclear-encoded) sigma factor is associated with the core the holoenzyme is formed, which can initiate transcription. Requires Mg(2+) as cofactor. It depends on Zn(2+) as a cofactor.

It localises to the plastid. The protein resides in the chloroplast. The catalysed reaction is RNA(n) + a ribonucleoside 5'-triphosphate = RNA(n+1) + diphosphate. DNA-dependent RNA polymerase catalyzes the transcription of DNA into RNA using the four ribonucleoside triphosphates as substrates. The chain is DNA-directed RNA polymerase subunit beta' from Liriodendron tulipifera (Tuliptree).